Here is an 839-residue protein sequence, read N- to C-terminus: Protein translocase subunit SecA (839 aa).

ATP contacts are provided by residues Gln-85, 103-107 (GEGKT), and Asp-493. Residues 780–790 (QIHEQERERAS) show a composition bias toward basic and acidic residues. Residues 780 to 839 (QIHEQERERASQRATTAAPQNIQSQQSANTDDLPKVERNEACPCGSGKKFKNCHGRKSFS) are disordered. A compositionally biased stretch (polar residues) spans 791–809 (QRATTAAPQNIQSQQSANT). Residues Cys-821, Cys-823, Cys-832, and His-833 each contribute to the Zn(2+) site. The segment covering 827 to 839 (KKFKNCHGRKSFS) has biased composition (basic residues).

The protein belongs to the SecA family. As to quaternary structure, monomer and homodimer. Part of the essential Sec protein translocation apparatus which comprises SecA, SecYEG and auxiliary proteins SecDF. Other proteins may also be involved. Zn(2+) serves as cofactor.

It is found in the cell membrane. The protein resides in the cytoplasm. The catalysed reaction is ATP + H2O + cellular proteinSide 1 = ADP + phosphate + cellular proteinSide 2.. Its function is as follows. Part of the Sec protein translocase complex. Interacts with the SecYEG preprotein conducting channel. Has a central role in coupling the hydrolysis of ATP to the transfer of proteins into and across the cell membrane, serving as an ATP-driven molecular motor driving the stepwise translocation of polypeptide chains across the membrane. This Streptococcus pyogenes serotype M1 protein is Protein translocase subunit SecA.